The sequence spans 156 residues: Ribonuclease 1B pancreatic (156 aa).

The signal sequence occupies residues 1–28 (MALDKSVIPLPLLVVVLLVLGWAQPSLG). Residues lysine 35 and arginine 38 each contribute to the substrate site. Histidine 40 acts as the Proton acceptor in catalysis. 4 disulfide bridges follow: cysteine 54–cysteine 112, cysteine 68–cysteine 123, cysteine 86–cysteine 138, and cysteine 93–cysteine 100. N-linked (GlcNAc...) asparagine glycosylation is present at asparagine 62. Substrate-binding positions include 69 to 73 (KSVNT), lysine 94, and arginine 113. An N-linked (GlcNAc...) asparagine glycan is attached at asparagine 116. The active-site Proton donor is histidine 147.

This sequence belongs to the pancreatic ribonuclease family. As to quaternary structure, monomer.

It localises to the secreted. The enzyme catalyses an [RNA] containing cytidine + H2O = an [RNA]-3'-cytidine-3'-phosphate + a 5'-hydroxy-ribonucleotide-3'-[RNA].. It carries out the reaction an [RNA] containing uridine + H2O = an [RNA]-3'-uridine-3'-phosphate + a 5'-hydroxy-ribonucleotide-3'-[RNA].. In terms of biological role, endonuclease that catalyzes the cleavage of RNA on the 3' side of pyrimidine nucleotides. Compared to RNASE1 it has lost activity towards dsRNA. The chain is Ribonuclease 1B pancreatic (RNASE1B) from Pygathrix nemaeus (Red-shanked douc langur).